Here is a 466-residue protein sequence, read N- to C-terminus: Asparagine--tRNA ligase (466 aa).

It belongs to the class-II aminoacyl-tRNA synthetase family. Homodimer.

It localises to the cytoplasm. It catalyses the reaction tRNA(Asn) + L-asparagine + ATP = L-asparaginyl-tRNA(Asn) + AMP + diphosphate + H(+). The sequence is that of Asparagine--tRNA ligase from Salmonella typhimurium (strain LT2 / SGSC1412 / ATCC 700720).